Here is a 249-residue protein sequence, read N- to C-terminus: Expansin-A19 (249 aa).

The N-terminal stretch at 1-21 (MGNIFLQLLAVVALCIAPARS) is a signal peptide. In terms of domain architecture, Expansin-like EG45 spans 41–154 (GGACGYGNLY…QQVKCWRYGG (114 aa)). 2 N-linked (GlcNAc...) asparagine glycosylation sites follow: Asn-116 and Asn-216. Residues 164–243 (YFELVLVTNM…GWSFGQTFST (80 aa)) enclose the Expansin-like CBD domain.

This sequence belongs to the expansin family. Expansin A subfamily.

Its subcellular location is the secreted. It localises to the cell wall. It is found in the membrane. In terms of biological role, may cause loosening and extension of plant cell walls by disrupting non-covalent bonding between cellulose microfibrils and matrix glucans. No enzymatic activity has been found. May be required for rapid internodal elongation in deepwater rice during submergence. This Oryza sativa subsp. japonica (Rice) protein is Expansin-A19 (EXPA19).